The following is a 136-amino-acid chain: ATP synthase epsilon chain, chloroplastic (136 aa).

It belongs to the ATPase epsilon chain family. In terms of assembly, F-type ATPases have 2 components, CF(1) - the catalytic core - and CF(0) - the membrane proton channel. CF(1) has five subunits: alpha(3), beta(3), gamma(1), delta(1), epsilon(1). CF(0) has three main subunits: a, b and c.

The protein resides in the plastid. Its subcellular location is the chloroplast thylakoid membrane. In terms of biological role, produces ATP from ADP in the presence of a proton gradient across the membrane. This chain is ATP synthase epsilon chain, chloroplastic, found in Chaetosphaeridium globosum (Charophycean green alga).